Reading from the N-terminus, the 360-residue chain is Phosphoserine aminotransferase (360 aa).

Arg42 is a binding site for L-glutamate. 4 residues coordinate pyridoxal 5'-phosphate: Trp102, Thr152, Asp171, and Gln194. Position 195 is an N6-(pyridoxal phosphate)lysine (Lys195). 237 to 238 (NT) contacts pyridoxal 5'-phosphate.

The protein belongs to the class-V pyridoxal-phosphate-dependent aminotransferase family. SerC subfamily. As to quaternary structure, homodimer. Pyridoxal 5'-phosphate serves as cofactor.

It localises to the cytoplasm. The catalysed reaction is O-phospho-L-serine + 2-oxoglutarate = 3-phosphooxypyruvate + L-glutamate. It carries out the reaction 4-(phosphooxy)-L-threonine + 2-oxoglutarate = (R)-3-hydroxy-2-oxo-4-phosphooxybutanoate + L-glutamate. It participates in amino-acid biosynthesis; L-serine biosynthesis; L-serine from 3-phospho-D-glycerate: step 2/3. Its pathway is cofactor biosynthesis; pyridoxine 5'-phosphate biosynthesis; pyridoxine 5'-phosphate from D-erythrose 4-phosphate: step 3/5. In terms of biological role, catalyzes the reversible conversion of 3-phosphohydroxypyruvate to phosphoserine and of 3-hydroxy-2-oxo-4-phosphonooxybutanoate to phosphohydroxythreonine. In Coxiella burnetii (strain RSA 493 / Nine Mile phase I), this protein is Phosphoserine aminotransferase.